Here is a 630-residue protein sequence, read N- to C-terminus: Polygalacturonase-1 non-catalytic subunit beta (630 aa).

The N-terminal stretch at methionine 1–glycine 27 is a signal peptide. Positions glycine 28–leucine 108 are excised as a propeptide. Residues asparagine 124, asparagine 142, asparagine 256, asparagine 334, asparagine 369, and asparagine 387 are each glycosylated (N-linked (GlcNAc...) asparagine). Positions glutamate 398–aspartate 630 are excised as a propeptide. The region spanning phenylalanine 415–alanine 629 is the BURP domain.

In terms of assembly, interacts with polygalacturonase-2 (isoenzymes PG2A and PG2B) to form heterodimers called polygalacturonase-1 (PG1). In terms of tissue distribution, mostly expressed in fruit pericarp. Also detected at low levels in cell wall of roots, leaves and flowers (at protein level).

The protein resides in the secreted. The protein localises to the extracellular space. Its subcellular location is the apoplast. It is found in the cell wall. Functionally, non-catalytic subunit of the polygalacturonase isozyme 1 (PG1). Necessary and sufficient to convert the polygalacturonase from its monomeric form PG2 to its heterodimeric form PG1. Seems to limit the depolymerization and solubilization of cell wall polyuronides mediated by PG2 during ripening, probably by recruiting PG2 to form PG1. The protein is Polygalacturonase-1 non-catalytic subunit beta (GP1) of Solanum lycopersicum (Tomato).